Reading from the N-terminus, the 156-residue chain is Mitochondrial translation release factor in rescue (156 aa).

The tract at residues 44-108 is GGQ domain; that stretch reads EEELEEQFVR…LREKLEVAYK (65 aa). The short motif at 58–60 is the GGQ element; sequence GGQ. Residues 100–141 adopt a coiled-coil conformation; the sequence is REKLEVAYKGEESELLKMKKESMQKKQDKRRKVNENIEKKRR. Composition is skewed to basic and acidic residues over residues 114 to 125 and 132 to 156; these read LLKMKKESMQKK and VNEN…DKST. A disordered region spans residues 114 to 156; it reads LLKMKKESMQKKQDKRRKVNENIEKKRRFKEMLNSKQEDDKST.

It belongs to the prokaryotic/mitochondrial release factor family. As to quaternary structure, interacts (via C-terminus) with MTRES1 (via S4 domain). Associates with mitoribosomal S39 large subunit, peptidyl tRNA and nascent chain.

Its subcellular location is the mitochondrion. In terms of biological role, part of a mitoribosome-associated quality control pathway that prevents aberrant translation by responding to interruptions during elongation. As heterodimer with MTRES1, ejects the unfinished nascent chain and peptidyl transfer RNA (tRNA), respectively, from stalled ribosomes. Recruitment of mitoribosome biogenesis factors to these quality control intermediates suggests additional roles for MTRES1 and MTRF during mitoribosome rescue. In Danio rerio (Zebrafish), this protein is Mitochondrial translation release factor in rescue (mtrfr).